We begin with the raw amino-acid sequence, 175 residues long: Protein FLOWERING LOCUS T (175 aa).

Belongs to the phosphatidylethanolamine-binding protein family. As to quaternary structure, interacts with FD/BZIP14 and FDP/BZIP27. Interacts with FTIP1/MCTP1 in phloem companion cells. Interacts with NAKR1. Mostly localized in leaves vasculature.

The protein localises to the cytoplasm. It localises to the nucleus. The protein resides in the endoplasmic reticulum. In terms of biological role, component of the mobile flower-promoting signal (floral stimulus or florigen). Promotes the transition from vegetative growth to flowering. Required for 'SEPALLATA3' (SEP3) and 'FRUITFULL' (FUL) accumulation in mature rosette leaves. Seems to acts in parallel with 'LEAFY' to induce flowering by regulating 'APETALA1'. Translated in leaves and then transported to the shoot apical meristem where it activates the transcription of several floral meristem identity genes. May play a role in both the autonomous and the long-day flowering pathways. In Arabidopsis thaliana (Mouse-ear cress), this protein is Protein FLOWERING LOCUS T.